Reading from the N-terminus, the 89-residue chain is Small ribosomal subunit protein uS15 (89 aa).

This sequence belongs to the universal ribosomal protein uS15 family. In terms of assembly, part of the 30S ribosomal subunit. Forms a bridge to the 50S subunit in the 70S ribosome, contacting the 23S rRNA.

In terms of biological role, one of the primary rRNA binding proteins, it binds directly to 16S rRNA where it helps nucleate assembly of the platform of the 30S subunit by binding and bridging several RNA helices of the 16S rRNA. Forms an intersubunit bridge (bridge B4) with the 23S rRNA of the 50S subunit in the ribosome. The sequence is that of Small ribosomal subunit protein uS15 from Thermus thermophilus (strain ATCC BAA-163 / DSM 7039 / HB27).